Reading from the N-terminus, the 319-residue chain is ATP-dependent 6-phosphofructokinase (319 aa).

Residue glycine 11 coordinates ATP. 21 to 25 (RAAVR) provides a ligand contact to ADP. ATP is bound by residues 72-73 (RS) and 102-105 (GDGS). Aspartate 103 is a binding site for Mg(2+). Residue 125–127 (TID) participates in substrate binding. The active-site Proton acceptor is aspartate 127. Arginine 154 is an ADP binding site. Substrate contacts are provided by residues arginine 162 and 169–171 (MGR). Residues 185–187 (GAE), arginine 211, and 213–215 (KKH) contribute to the ADP site. Substrate-binding positions include glutamate 222, arginine 243, and 249–252 (HIQR).

The protein belongs to the phosphofructokinase type A (PFKA) family. ATP-dependent PFK group I subfamily. Prokaryotic clade 'B1' sub-subfamily. As to quaternary structure, homotetramer. It depends on Mg(2+) as a cofactor.

The protein localises to the cytoplasm. It catalyses the reaction beta-D-fructose 6-phosphate + ATP = beta-D-fructose 1,6-bisphosphate + ADP + H(+). It functions in the pathway carbohydrate degradation; glycolysis; D-glyceraldehyde 3-phosphate and glycerone phosphate from D-glucose: step 3/4. Its activity is regulated as follows. Allosterically activated by ADP and other diphosphonucleosides, and allosterically inhibited by phosphoenolpyruvate. In terms of biological role, catalyzes the phosphorylation of D-fructose 6-phosphate to fructose 1,6-bisphosphate by ATP, the first committing step of glycolysis. This Brevibacillus brevis (strain 47 / JCM 6285 / NBRC 100599) protein is ATP-dependent 6-phosphofructokinase.